We begin with the raw amino-acid sequence, 351 residues long: Uroporphyrinogen decarboxylase (351 aa).

Residues Arg25–Arg29, Asp74, Tyr151, Ser206, and His325 each bind substrate.

This sequence belongs to the uroporphyrinogen decarboxylase family. As to quaternary structure, homodimer.

It is found in the cytoplasm. It carries out the reaction uroporphyrinogen III + 4 H(+) = coproporphyrinogen III + 4 CO2. The protein operates within porphyrin-containing compound metabolism; protoporphyrin-IX biosynthesis; coproporphyrinogen-III from 5-aminolevulinate: step 4/4. In terms of biological role, catalyzes the decarboxylation of four acetate groups of uroporphyrinogen-III to yield coproporphyrinogen-III. This is Uroporphyrinogen decarboxylase from Chlorobium phaeobacteroides (strain BS1).